The primary structure comprises 250 residues: Cruxrhodopsin-3 (250 aa).

The Extracellular segment spans residues M1–I9. A helical transmembrane segment spans residues W10 to A27. At R28–Y41 the chain is on the cytoplasmic side. Residues I42–L60 traverse the membrane as a helical segment. The Extracellular segment spans residues G61 to Y77. The helical transmembrane segment at W78 to D94 threads the bilayer. Residues L95 to T105 lie on the Cytoplasmic side of the membrane. The chain crosses the membrane as a helical span at residues I106–L125. At S126 to R138 the chain is on the extracellular side. The chain crosses the membrane as a helical span at residues L139–S158. The Cytoplasmic segment spans residues S159–K176. Residues T177 to V195 form a helical membrane-spanning segment. At G196 to I207 the chain is on the extracellular side. Residues E208–L227 form a helical membrane-spanning segment. K220 is modified (N6-(retinylidene)lysine). Over L228–D250 the chain is Cytoplasmic.

Belongs to the archaeal/bacterial/fungal opsin family. As to quaternary structure, homotrimer. Binds bacterioruberin in the crevice between neighboring subunits.

The protein resides in the cell membrane. Light-driven proton pump. The polypeptide is Cruxrhodopsin-3 (cop3) (Haloarcula vallismortis (Halobacterium vallismortis)).